Consider the following 155-residue polypeptide: Small ribosomal subunit protein uS7c (155 aa).

The protein belongs to the universal ribosomal protein uS7 family. Part of the 30S ribosomal subunit.

Its subcellular location is the plastid. It is found in the chloroplast. Its function is as follows. One of the primary rRNA binding proteins, it binds directly to 16S rRNA where it nucleates assembly of the head domain of the 30S subunit. The protein is Small ribosomal subunit protein uS7c (rps7) of Euonymus alatus (Burning bush).